We begin with the raw amino-acid sequence, 842 residues long: Probable receptor-like protein kinase At5g61350 (842 aa).

Residues 1–27 (MGGDFRHFSSHVSLLLLFLLIVKSSSS) form the signal peptide. Residues 28–425 (FTPADNYLID…IGGMSSKKLA (398 aa)) lie on the Extracellular side of the membrane. Residues asparagine 81, asparagine 125, asparagine 252, asparagine 294, asparagine 359, and asparagine 365 are each glycosylated (N-linked (GlcNAc...) asparagine). A helical transmembrane segment spans residues 426–446 (IAGIGFVMALTAFLGVVVLLV). The Cytoplasmic portion of the chain corresponds to 447-842 (RWQRRPKDWQ…EMQSPSHSIP (396 aa)). The region spanning 525-803 (FDENAVCGVG…GDVLWNLEYA (279 aa)) is the Protein kinase domain. ATP contacts are provided by residues 531–539 (CGVGGFGKV) and lysine 553. Aspartate 655 acts as the Proton acceptor in catalysis.

The protein belongs to the protein kinase superfamily. Ser/Thr protein kinase family.

The protein localises to the membrane. This chain is Probable receptor-like protein kinase At5g61350, found in Arabidopsis thaliana (Mouse-ear cress).